The following is a 258-amino-acid chain: uncharacterized protein (258 aa).

The HTH deoR-type domain occupies Val-3–Ser-58. Positions Ile-20–Asp-39 form a DNA-binding region, H-T-H motif.

This is an uncharacterized protein from Bacillus subtilis (strain 168).